The chain runs to 243 residues: Pyrimidodiazepine synthase (243 aa).

Residues 20-102 (GILRLYSMRF…YLDEQYPLRP (83 aa)) enclose the GST N-terminal domain. Cysteine 30 (nucleophile) is an active-site residue. Glutathione is bound by residues lysine 57, valine 70, and 86-87 (ES). A GST C-terminal domain is found at 107–230 (DPLKKVQDKL…VQAEFLRTRS (124 aa)).

This sequence belongs to the GST superfamily. Omega family. In terms of assembly, homodimer.

It catalyses the reaction 2-amino-6-acetyl-3,7,8,9-tetrahydro-3H-pyrimido[4,5-b][1,4]diazepin-4-one + glutathione disulfide + H2O = 6-pyruvoyl-5,6,7,8-tetrahydropterin + 2 glutathione. Mediates the conversion of 2-amino-4-oxo-6-pyruvoyl-5,6,7,8-tetrahydropteridine (6-PTP; also named 6-pyruvoyltetrahydropterin) to 2-amino-6-acetyl-3,7,8,9-tetrahydro-3H-pyrimido(4,5-b)[1,4]diazepin-4-one (pyrimidodiazepine or PDA), a key intermediate in red eye pigment drosopterin biosynthesis. The sequence is that of Pyrimidodiazepine synthase from Drosophila melanogaster (Fruit fly).